Here is a 143-residue protein sequence, read N- to C-terminus: FIS1-related protein fis-1 (143 aa).

The helical transmembrane segment at 121–141 (LGLLGGAVAVVGGLVIAGLAF) threads the bilayer.

Belongs to the FIS1 family.

It is found in the mitochondrion outer membrane. Its subcellular location is the peroxisome membrane. In terms of biological role, involved in the fragmentation of the mitochondrial network. Involved in perinuclear clustering of the mitochondrial network. Plays a role in removal of ultraviolet C radiation-induced mitochondrial DNA damage. May act, redundantly with fis-2, downstream of mitochondrial fission, before the fission products participate in either mitochondrial homeostasis, mitophagy, or apoptosis. This is FIS1-related protein fis-1 from Caenorhabditis elegans.